A 156-amino-acid polypeptide reads, in one-letter code: Transcriptional repressor NrdR (156 aa).

Residues 3 to 34 fold into a zinc finger; it reads CPKCNSTHSRVVDSRHADEANAIRRRRECENC. An ATP-cone domain is found at 49 to 139; it reads LIVVKKDGTR…VYKEFKDVDQ (91 aa).

The protein belongs to the NrdR family. Zn(2+) serves as cofactor.

Its function is as follows. Negatively regulates transcription of bacterial ribonucleotide reductase nrd genes and operons by binding to NrdR-boxes. This chain is Transcriptional repressor NrdR, found in Staphylococcus epidermidis (strain ATCC 35984 / DSM 28319 / BCRC 17069 / CCUG 31568 / BM 3577 / RP62A).